Consider the following 1299-residue polypeptide: Sophorolipid transporter (1299 aa).

Over 1–64 (MVDDIQVEKR…FCTPLDVFLE (64 aa)) the chain is Cytoplasmic. A helical membrane pass occupies residues 65 to 85 (ILALFFAAVHGAALPMFTLVV). The 292-residue stretch at 65–356 (ILALFFAAVH…IAPNVRFLVK (292 aa)) folds into the ABC transmembrane type-1 1 domain. The Extracellular segment spans residues 86-114 (GAIFNTFRDFTSYDLKGNEFQHKVNHLSL). The chain crosses the membrane as a helical span at residues 115–135 (YFVYIGIGMLGSAFLESFLLV). The Cytoplasmic portion of the chain corresponds to 136-187 (DRGEVLAGRYRKHYLSAVIRQNIAFYDKLGGGEVSTRIINDTNSIQEAISDK). The chain crosses the membrane as a helical span at residues 188–208 (LGNVVQGIASFIAATVISFAS). The Extracellular portion of the chain corresponds to 209–214 (QWKLAC). The helical transmembrane segment at 215-235 (ILLSAVGFMVITMGTGATFMA) threads the bilayer. At 236–293 (KYQLRSDAIYSQSGATVAEEALSAVRTTVAFGAQPHLAVKYEKVLDRVVKESKRSSYS) the chain is on the cytoplasmic side. The helical transmembrane segment at 294–314 (LGVMLACIWASTFWVYALALW) threads the bilayer. The Extracellular portion of the chain corresponds to 315–326 (QGSREIVSGSAD). A helical membrane pass occupies residues 327 to 347 (VGKIIVVITAMLLGSFQLGNI). Topologically, residues 348–725 (APNVRFLVKG…WGLNRKEWGY (378 aa)) are cytoplasmic. Residues 393–638 (IELKNVKFRY…EGPYKALVDA (246 aa)) enclose the ABC transporter 1 domain. ATP is bound at residue 428–435 (GASGSGKS). Residues 681–690 (SAGTQTTQPP) show a composition bias toward polar residues. The tract at residues 681 to 703 (SAGTQTTQPPEYQENDIPGVRNP) is disordered. A helical membrane pass occupies residues 726-746 (ILIGSLASIILGYCYPAMAII). The ABC transmembrane type-1 2 domain occupies 727–1016 (LIGSLASIIL…IFSYAPNMNS (290 aa)). At 747 to 769 (TGQTTGSMVLPPSEYGKMRHVVN) the chain is on the extracellular side. The chain crosses the membrane as a helical span at residues 770–790 (IMGWWYFFVGCISFMTAFITI). Residues 791 to 848 (AALSLASDKLVKNIRLALFRQLMRMDIAFFDHKNNTPGALTSILAKEAKMIEGLSGAT) lie on the Cytoplasmic side of the membrane. Residues 849-869 (LGQIQQSLVTLIGGIVTGIPF) form a helical membrane-spanning segment. The Extracellular segment spans residues 870–874 (NWRIG). A helical membrane pass occupies residues 875-895 (LVATSVVPVMLVCGFVRVWVL). Residues 896 to 954 (TQLSDRAREVYERSGSMASEYTSAVRTVQSLTRELDVVVKYTKTVDSQIFSSRIAIARS) lie on the Cytoplasmic side of the membrane. The helical transmembrane segment at 955–975 (ALYYALSEGMTPWVVALVFWW) threads the bilayer. Residues 976-987 (GSTVMRRGEASV) are Extracellular-facing. Residues 988-1008 (AGYMTVFMAIITGSQAAGQIF) traverse the membrane as a helical segment. Over 1009-1299 (SYAPNMNSAK…LVNLQGLGEI (291 aa)) the chain is Cytoplasmic. Residues 1053-1293 (IEFRHVNFRY…NGWYAELVNL (241 aa)) form the ABC transporter 2 domain. 1088–1095 (GASGCGKS) serves as a coordination point for ATP.

The protein belongs to the ABC transporter superfamily. ABCB family. Multidrug resistance exporter (TC 3.A.1.201) subfamily.

The protein localises to the cell membrane. In terms of biological role, transports acidic acylated and non-acylated sophorolipids (SLs) into the extracellular space, where they can be lactonized by lactone esterase. This chain is Sophorolipid transporter (mdr), found in Starmerella bombicola (Yeast).